A 438-amino-acid chain; its full sequence is Battenin (438 aa).

A disordered region spans residues 1 to 29 (MGGCAGSRRRLLDSEEEETAPEPRPPRSY). Residues 1 to 37 (MGGCAGSRRRLLDSEEEETAPEPRPPRSYHKGALWKN) lie on the Cytoplasmic side of the membrane. Residue Ser14 is modified to Phosphoserine. The chain crosses the membrane as a helical span at residues 38–58 (VMGFWLLGLCNNFSYVVMLSA). Topologically, residues 59–127 (AHDILSHQRA…GLHLLPYSPR (69 aa)) are lumenal. Positions 68–89 (ASGNQSHVDPDPPPTAHNSSSR) are disordered. Asn71 and Asn85 each carry an N-linked (GlcNAc...) asparagine glycan. Residues 128 to 148 (VLVSGICAAGSFILVAFSHSV) form a helical membrane-spanning segment. Residues 149-151 (GTS) lie on the Cytoplasmic side of the membrane. A helical transmembrane segment spans residues 152 to 172 (LCGVVLASISSGVGEVTFLSL). Over 173–182 (TAFYPRAVIS) the chain is Lumenal. Residues 183 to 203 (WWSSGTGGAGLMGALSYLGLT) traverse the membrane as a helical segment. Over 204–277 (QAGLSPQHTL…NLSLQERWTV (74 aa)) the chain is Cytoplasmic. Positions 236–267 (PQDPGGEEEAETSARQPLIDSETPESKPDSSS) are disordered. The Lysosomal targeting motif signature appears at 242-244 (EEE). A Lysosomal targeting motif. Required for AP1G1, AP2A2 and AP3D1 interaction motif is present at residues 253-254 (LI). A helical transmembrane segment spans residues 278-298 (FKGLLWYIVPLVLVYFAEYFI). Topologically, residues 299-346 (NQGLFELLFFRNTSLNHAQQYRWYQMLYQAGVFVSRSSLHCCRIRFTW) are lumenal. A glycan (N-linked (GlcNAc...) asparagine) is linked at Asn310. A helical membrane pass occupies residues 347–367 (VLALLQCLNLAFLLVDVWFSF). Residues 368 to 438 (LPSIYLVFLI…PLHDFLCHLS (71 aa)) lie on the Cytoplasmic side of the membrane. The Lysosomal targeting motif signature appears at 409 to 419 (MAAACISDTLG). Position 435 is a cysteine methyl ester (Cys435). Cys435 is lipidated: S-farnesyl cysteine. Residues 436–438 (HLS) constitute a propeptide, removed in mature form.

This sequence belongs to the battenin family. As to quaternary structure, interacts with DCTN1, KIF3A, RAB7A and RILP. Interacts with CLN5. Post-translationally, highly glycosylated. In terms of processing, farnesylation is important for trafficking to lysosomes.

It localises to the lysosome membrane. It is found in the late endosome. The protein resides in the lysosome. In terms of biological role, mediates microtubule-dependent, anterograde transport connecting the Golgi network, endosomes, autophagosomes, lysosomes and plasma membrane, and participates in several cellular processes such as regulation of lysosomal pH, lysosome protein degradation, receptor-mediated endocytosis, autophagy, transport of proteins and lipids from the TGN, apoptosis and synaptic transmission. Facilitates the proteins transport from trans-Golgi network (TGN)-to other membrane compartments such as transport of microdomain-associated proteins to the plasma membrane, IGF2R transport to the lysosome where it regulates the CTSD release leading to regulation of CTSD maturation and thereby APP intracellular processing. Moreover regulates CTSD activity in response to osmotic stress. Also binds galactosylceramide and transports it from the trans Golgi to the rafts, which may have immediate and downstream effects on cell survival by modulating ceramide synthesis. At the plasma membrane, regulates actin-dependent events including filopodia formation, cell migration, and pinocytosis through ARF1-CDC42 pathway and also the cytoskeleton organization through interaction with MYH10 and fodrin leading to the regulation of the plasma membrane association of Na+, K+ ATPase complex. Regulates synaptic transmission in the amygdala, hippocampus, and cerebellum through regulation of synaptic vesicles density and their proximity to active zones leading to modulation of short-term plasticity and age-dependent anxious behavior, learning and memory. Regulates autophagic vacuoles (AVs) maturation by modulating the trafficking between endocytic and autophagolysosomal/lysosomal compartments, which involves vesicle fusion leading to regulation of degradation process. Also participates in cellular homeostasis of compounds such as, water, ions, amino acids, proteins and lipids in several tissue namely in brain and kidney through regulation of their transport and synthesis. The sequence is that of Battenin from Canis lupus familiaris (Dog).